A 490-amino-acid chain; its full sequence is AP-5 complex subunit mu-1 (490 aa).

Positions 206–476 constitute an MHD domain; sequence KAQISISITE…LISSDYYIWN (271 aa).

This sequence belongs to the adaptor complexes medium subunit family. Probably part of the adaptor protein complex 5 (AP-5) a tetramer composed of AP5B1, AP5M1, AP5S1 and AP5Z1. As to expression, widely expressed, including in small intestine and testis. In small intestine, highly expressed in cytoplasm of villi epithelial cells and internal glands. In testis, selectively expressed in maturing sperm cells (at protein level).

It localises to the cytoplasm. It is found in the cytosol. The protein localises to the late endosome membrane. Its subcellular location is the lysosome membrane. In terms of biological role, as part of AP-5, a probable fifth adaptor protein complex it may be involved in endosomal transport. This chain is AP-5 complex subunit mu-1 (Ap5m1), found in Mus musculus (Mouse).